The primary structure comprises 258 residues: Cytochrome c oxidase subunit 2 (258 aa).

Topologically, residues 1-41 (MIVNECLFFTIALCDAAEPWQLGFQDAATPMMQGIIDLHHD) are mitochondrial intermembrane. The helical transmembrane segment at 42-58 (ILFFLILILVFVLWILV) threads the bilayer. Residues 59 to 82 (RALWHFYYKKNPIPQRIVHGTTIE) lie on the Mitochondrial matrix side of the membrane. A helical transmembrane segment spans residues 83–104 (ILWTIFPSIILMFIAIPSFALL). Topologically, residues 105 to 258 (YSMDEVVVDP…VSNLFIPPTS (154 aa)) are mitochondrial intermembrane. Cu cation-binding residues include His187, Cys222, Glu224, Cys226, His230, and Met233. Glu224 lines the Mg(2+) pocket.

Belongs to the cytochrome c oxidase subunit 2 family. Component of the cytochrome c oxidase (complex IV, CIV), a multisubunit enzyme composed of a catalytic core of 3 subunits and several supernumerary subunits. The complex exists as a monomer or a dimer and forms supercomplexes (SCs) in the inner mitochondrial membrane with ubiquinol-cytochrome c oxidoreductase (cytochrome b-c1 complex, complex III, CIII). Cu cation is required as a cofactor.

Its subcellular location is the mitochondrion inner membrane. The enzyme catalyses 4 Fe(II)-[cytochrome c] + O2 + 8 H(+)(in) = 4 Fe(III)-[cytochrome c] + 2 H2O + 4 H(+)(out). Component of the cytochrome c oxidase, the last enzyme in the mitochondrial electron transport chain which drives oxidative phosphorylation. The respiratory chain contains 3 multisubunit complexes succinate dehydrogenase (complex II, CII), ubiquinol-cytochrome c oxidoreductase (cytochrome b-c1 complex, complex III, CIII) and cytochrome c oxidase (complex IV, CIV), that cooperate to transfer electrons derived from NADH and succinate to molecular oxygen, creating an electrochemical gradient over the inner membrane that drives transmembrane transport and the ATP synthase. Cytochrome c oxidase is the component of the respiratory chain that catalyzes the reduction of oxygen to water. Electrons originating from reduced cytochrome c in the intermembrane space (IMS) are transferred via the dinuclear copper A center (CU(A)) of subunit 2 and heme A of subunit 1 to the active site in subunit 1, a binuclear center (BNC) formed by heme A3 and copper B (CU(B)). The BNC reduces molecular oxygen to 2 water molecules using 4 electrons from cytochrome c in the IMS and 4 protons from the mitochondrial matrix. In Oenothera berteroana (Bertero's evening primrose), this protein is Cytochrome c oxidase subunit 2 (COX2).